Consider the following 493-residue polypeptide: tRNA (uracil-5-)-methyltransferase homolog B (493 aa).

A mitochondrion-targeting transit peptide spans M1–F14. Positions 312, 362, and 412 each coordinate S-adenosyl-L-methionine. C440 serves as the catalytic Nucleophile. Residue E486 is the Proton acceptor of the active site.

Belongs to the class I-like SAM-binding methyltransferase superfamily. RNA M5U methyltransferase family.

It is found in the mitochondrion matrix. The catalysed reaction is uridine(54) in tRNA + S-adenosyl-L-methionine = 5-methyluridine(54) in tRNA + S-adenosyl-L-homocysteine + H(+). It carries out the reaction a uridine in 12S rRNA + S-adenosyl-L-methionine = a 5-methyluridine in 12S rRNA + S-adenosyl-L-homocysteine + H(+). Mitochondrial S-adenosyl-L-methionine-dependent methyltransferase that catalyzes the formation of 5-methyl-uridine in tRNAs and 12S rRNA. Catalyzes the methylation of uridine at position 54 (m5U54) in all tRNAs. Specifically methylates the uridine in position 425 of 12S rRNA (m5U425). Does not affect RNA stability or mitochondrial translation. This chain is tRNA (uracil-5-)-methyltransferase homolog B, found in Mus musculus (Mouse).